A 578-amino-acid chain; its full sequence is Isocitrate dehydrogenase kinase/phosphatase (578 aa).

ATP contacts are provided by residues 315-321 (APGIRGM) and Lys336. Asp371 is an active-site residue.

Belongs to the AceK family.

The protein resides in the cytoplasm. It carries out the reaction L-seryl-[isocitrate dehydrogenase] + ATP = O-phospho-L-seryl-[isocitrate dehydrogenase] + ADP + H(+). In terms of biological role, bifunctional enzyme which can phosphorylate or dephosphorylate isocitrate dehydrogenase (IDH) on a specific serine residue. This is a regulatory mechanism which enables bacteria to bypass the Krebs cycle via the glyoxylate shunt in response to the source of carbon. When bacteria are grown on glucose, IDH is fully active and unphosphorylated, but when grown on acetate or ethanol, the activity of IDH declines drastically concomitant with its phosphorylation. In Shigella boydii serotype 18 (strain CDC 3083-94 / BS512), this protein is Isocitrate dehydrogenase kinase/phosphatase.